Reading from the N-terminus, the 346-residue chain is 4-hydroxy-3-methylbut-2-enyl diphosphate reductase (346 aa).

Residue Cys-19 participates in [4Fe-4S] cluster binding. Positions 48 and 84 each coordinate (2E)-4-hydroxy-3-methylbut-2-enyl diphosphate. Dimethylallyl diphosphate-binding residues include His-48 and His-84. Isopentenyl diphosphate contacts are provided by His-48 and His-84. Residue Cys-106 coordinates [4Fe-4S] cluster. (2E)-4-hydroxy-3-methylbut-2-enyl diphosphate is bound at residue His-134. Dimethylallyl diphosphate is bound at residue His-134. Residue His-134 participates in isopentenyl diphosphate binding. Glu-136 serves as the catalytic Proton donor. Residue Thr-175 participates in (2E)-4-hydroxy-3-methylbut-2-enyl diphosphate binding. Cys-205 lines the [4Fe-4S] cluster pocket. Residues Ser-233, Ser-234, Asn-235, and Ser-278 each coordinate (2E)-4-hydroxy-3-methylbut-2-enyl diphosphate. Ser-233, Ser-234, Asn-235, and Ser-278 together coordinate dimethylallyl diphosphate. Isopentenyl diphosphate is bound by residues Ser-233, Ser-234, Asn-235, and Ser-278.

Belongs to the IspH family. The cofactor is [4Fe-4S] cluster.

It catalyses the reaction isopentenyl diphosphate + 2 oxidized [2Fe-2S]-[ferredoxin] + H2O = (2E)-4-hydroxy-3-methylbut-2-enyl diphosphate + 2 reduced [2Fe-2S]-[ferredoxin] + 2 H(+). The enzyme catalyses dimethylallyl diphosphate + 2 oxidized [2Fe-2S]-[ferredoxin] + H2O = (2E)-4-hydroxy-3-methylbut-2-enyl diphosphate + 2 reduced [2Fe-2S]-[ferredoxin] + 2 H(+). Its pathway is isoprenoid biosynthesis; dimethylallyl diphosphate biosynthesis; dimethylallyl diphosphate from (2E)-4-hydroxy-3-methylbutenyl diphosphate: step 1/1. The protein operates within isoprenoid biosynthesis; isopentenyl diphosphate biosynthesis via DXP pathway; isopentenyl diphosphate from 1-deoxy-D-xylulose 5-phosphate: step 6/6. Functionally, catalyzes the conversion of 1-hydroxy-2-methyl-2-(E)-butenyl 4-diphosphate (HMBPP) into a mixture of isopentenyl diphosphate (IPP) and dimethylallyl diphosphate (DMAPP). Acts in the terminal step of the DOXP/MEP pathway for isoprenoid precursor biosynthesis. The polypeptide is 4-hydroxy-3-methylbut-2-enyl diphosphate reductase (Brucella abortus (strain S19)).